We begin with the raw amino-acid sequence, 85 residues long: MGNLISMCLYNSKGNSTAKINDSSTWYPQPGQHISIRTYRELNPAPTSTPTSTRTETLSNGENSRLTLDLLEEASRQLTTNVQRP.

A lipid anchor (N-myristoyl glycine; by host) is attached at Gly-2. The segment at 42-65 is disordered; that stretch reads LNPAPTSTPTSTRTETLSNGENSR. Low complexity predominate over residues 44–59; sequence PAPTSTPTSTRTETLS.

It belongs to the geminiviridae protein AC4/C4 family.

Its subcellular location is the host cell membrane. Pathogenicity determinant. May act as a suppressor of RNA-mediated gene silencing, also known as post-transcriptional gene silencing (PTGS), a mechanism of plant viral defense that limits the accumulation of viral RNAs. The chain is Protein C4 from Solanum lycopersicum (Tomato).